The following is a 78-amino-acid chain: Large ribosomal subunit protein bL28 (78 aa).

Residues 1–21 (MSRVCQVTGKRPVSGNNRSHA) form a disordered region.

The protein belongs to the bacterial ribosomal protein bL28 family.

In Sodalis glossinidius (strain morsitans), this protein is Large ribosomal subunit protein bL28.